The sequence spans 350 residues: Solute carrier family 35 member E4 (350 aa).

Over residues 19-30 the composition is skewed to low complexity; it reads GAAAGGAQAAGP. The tract at residues 19–42 is disordered; sequence GAAAGGAQAAGPPEWPPGSPQALR. Transmembrane regions (helical) follow at residues 51–71, 73–93, 110–132, 135–155, 218–238, 258–278, 279–299, and 312–332; these read MAALVWLLAGASMSSLNKWIF, VHGFGRPLLLSALHMLVAALA, VLLLSLTFGTSMACGNVGLRAVP, LAQLVTTTTPLFTLALSALLL, VTLLYATSLPSFCLLAGAALV, ILLSCLLSVLYNLASFSLLAL, TSALTVHVLGNLTVVGNLILS, and YVGIALTLSGMFLYHNCEFVA. Residues 125 to 179 enclose the EamA domain; that stretch reads NVGLRAVPLDLAQLVTTTTPLFTLALSALLLGRRHHPLQLAAMGPLCLGAACSLA.

Belongs to the TPT transporter family. SLC35E subfamily.

Its subcellular location is the membrane. Functionally, putative transporter. The polypeptide is Solute carrier family 35 member E4 (SLC35E4) (Homo sapiens (Human)).